Reading from the N-terminus, the 167-residue chain is Large ribosomal subunit protein uL10 (167 aa).

Belongs to the universal ribosomal protein uL10 family. As to quaternary structure, part of the ribosomal stalk of the 50S ribosomal subunit. The N-terminus interacts with L11 and the large rRNA to form the base of the stalk. The C-terminus forms an elongated spine to which L12 dimers bind in a sequential fashion forming a multimeric L10(L12)X complex.

In terms of biological role, forms part of the ribosomal stalk, playing a central role in the interaction of the ribosome with GTP-bound translation factors. This Yersinia enterocolitica serotype O:8 / biotype 1B (strain NCTC 13174 / 8081) protein is Large ribosomal subunit protein uL10.